The following is a 138-amino-acid chain: Cytosolic calcium-binding protein 2 (138 aa).

Residues 31-41 (TEVTQQPEESV) show a composition bias toward low complexity. The interval 31–122 (TEVTQQPEES…KKTEVVEEKQ (92 aa)) is disordered. Tandem repeats lie at residues 62-68 (VEEAEKK), 71-75 (ETEKK), 92-98 (VEEEEKK), 109-114 (VEEEKK), 118-122 (VEEKQ), and 131-135 (VAVEK). The segment at 62–135 (VEEAEKKDEE…AAAEEVAVEK (74 aa)) is 6 X 5 AA approximate repeats of V-E-E-K-K. Residues 64–85 (EAEKKDEETEKKTEEKDEKTEV) show a composition bias toward basic and acidic residues. Over residues 110–122 (EEEKKTEVVEEKQ) the composition is skewed to basic and acidic residues.

In terms of tissue distribution, predominantly expressed in roots (e.g. in endodermis in the stele) and stems, to a lower extent in shoots, flowers and siliques, and, at low levels, in leaves.

It localises to the cytoplasm. It is found in the cytosol. Functionally, binds calcium Ca(2+) and may act as a signal mediator to buffer Ca(2+). The sequence is that of Cytosolic calcium-binding protein 2 from Arabidopsis thaliana (Mouse-ear cress).